The primary structure comprises 313 residues: Porphobilinogen deaminase (313 aa).

Cysteine 242 carries the S-(dipyrrolylmethanemethyl)cysteine modification.

The protein belongs to the HMBS family. As to quaternary structure, monomer. Dipyrromethane is required as a cofactor.

It catalyses the reaction 4 porphobilinogen + H2O = hydroxymethylbilane + 4 NH4(+). Its pathway is porphyrin-containing compound metabolism; protoporphyrin-IX biosynthesis; coproporphyrinogen-III from 5-aminolevulinate: step 2/4. Its function is as follows. Tetrapolymerization of the monopyrrole PBG into the hydroxymethylbilane pre-uroporphyrinogen in several discrete steps. In Escherichia coli O6:H1 (strain CFT073 / ATCC 700928 / UPEC), this protein is Porphobilinogen deaminase.